Consider the following 1923-residue polypeptide: Nuclear pore complex protein GP210 (1923 aa).

Residues 1–22 form the signal peptide; that stretch reads MVPVSFCFFFLLLLLSAGESSS. 13 N-linked (GlcNAc...) asparagine glycosylation sites follow: Asn-73, Asn-117, Asn-289, Asn-609, Asn-863, Asn-903, Asn-967, Asn-982, Asn-1171, Asn-1199, Asn-1550, Asn-1568, and Asn-1743. A BIG2 domain is found at 1152–1205; sequence IFLVPGASYVLTIEGGPTMNVSVDYTTVDNEVAKIEKSGRLYATSPGNTTIYAT. Residues 1829–1849 traverse the membrane as a helical segment; that stretch reads SVLLKILWGVLVLVVSVIILM.

Belongs to the NUP210 family. Part of the nuclear pore complex (NPC). The NPC has an eight-fold symmetrical structure comprising a central transport channel and two rings, the cytoplasmic and nuclear rings, to which eight filaments are attached. The cytoplasmic filaments have loose ends, while the nuclear filaments are joined in a distal ring, forming a nuclear basket. NPCs are highly dynamic in configuration and composition, and can be devided in 3 subcomplexes, the NUP62 subcomplex, the NUP107-160 subcomplex and the NUP93 subcomplex, containing approximately 30 different nucleoporin proteins.

The protein resides in the nucleus envelope. It localises to the nucleus membrane. It is found in the nucleus. Its subcellular location is the nuclear pore complex. The protein is Nuclear pore complex protein GP210 of Arabidopsis thaliana (Mouse-ear cress).